The sequence spans 233 residues: Phosphoenolpyruvate guanylyltransferase 1 (233 aa).

Phosphoenolpyruvate is bound by residues Thr-154, Gly-171, and Ser-174.

This sequence belongs to the CofC family.

The enzyme catalyses phosphoenolpyruvate + GTP + H(+) = enolpyruvoyl-2-diphospho-5'-guanosine + diphosphate. Its pathway is cofactor biosynthesis; coenzyme F420 biosynthesis. Guanylyltransferase that catalyzes the activation of phosphoenolpyruvate (PEP) as enolpyruvoyl-2-diphospho-5'-guanosine, via the condensation of PEP with GTP. It is involved in the biosynthesis of coenzyme F420, a hydride carrier cofactor. This is Phosphoenolpyruvate guanylyltransferase 1 from Rhodococcus jostii (strain RHA1).